A 30-amino-acid chain; its full sequence is Serum amyloid P-component (30 aa).

The Pentraxin (PTX) domain maps to 1–30 (APQDLSGKMFIFPQETSTANVXLTARSQDF).

This sequence belongs to the pentraxin family. In terms of assembly, homopentamer. Discoid arrangement of 5 covalently bound subunits. It depends on Ca(2+) as a cofactor.

Its subcellular location is the secreted. The sequence is that of Serum amyloid P-component from Anarhichas lupus (Atlantic wolffish).